We begin with the raw amino-acid sequence, 273 residues long: Putative pyruvate, phosphate dikinase regulatory protein (273 aa).

149–156 (GPSRTSKT) is an ADP binding site.

This sequence belongs to the pyruvate, phosphate/water dikinase regulatory protein family. PDRP subfamily.

It carries out the reaction N(tele)-phospho-L-histidyl/L-threonyl-[pyruvate, phosphate dikinase] + ADP = N(tele)-phospho-L-histidyl/O-phospho-L-threonyl-[pyruvate, phosphate dikinase] + AMP + H(+). The catalysed reaction is N(tele)-phospho-L-histidyl/O-phospho-L-threonyl-[pyruvate, phosphate dikinase] + phosphate + H(+) = N(tele)-phospho-L-histidyl/L-threonyl-[pyruvate, phosphate dikinase] + diphosphate. Bifunctional serine/threonine kinase and phosphorylase involved in the regulation of the pyruvate, phosphate dikinase (PPDK) by catalyzing its phosphorylation/dephosphorylation. In Rickettsia bellii (strain OSU 85-389), this protein is Putative pyruvate, phosphate dikinase regulatory protein.